Consider the following 144-residue polypeptide: Large ribosomal subunit protein uL15 (144 aa).

Residues 1–44 are disordered; it reads MNLNELQPAAGSRKLRNRVGRGTSSGNGKTSGRGQKGQKARGKV. Positions 23 to 35 are enriched in gly residues; the sequence is TSSGNGKTSGRGQ.

Belongs to the universal ribosomal protein uL15 family. Part of the 50S ribosomal subunit.

Functionally, binds to the 23S rRNA. This Leuconostoc citreum (strain KM20) protein is Large ribosomal subunit protein uL15.